A 304-amino-acid polypeptide reads, in one-letter code: Homoserine kinase (304 aa).

An ATP-binding site is contributed by 86 to 96; the sequence is PLARGLGSSAA.

This sequence belongs to the GHMP kinase family. Homoserine kinase subfamily.

It is found in the cytoplasm. It catalyses the reaction L-homoserine + ATP = O-phospho-L-homoserine + ADP + H(+). Its pathway is amino-acid biosynthesis; L-threonine biosynthesis; L-threonine from L-aspartate: step 4/5. In terms of biological role, catalyzes the ATP-dependent phosphorylation of L-homoserine to L-homoserine phosphate. The chain is Homoserine kinase from Carboxydothermus hydrogenoformans (strain ATCC BAA-161 / DSM 6008 / Z-2901).